The primary structure comprises 74 residues: Ubiquitin-like protein FUBI (74 aa).

It belongs to the ubiquitin family.

The polypeptide is Ubiquitin-like protein FUBI (FAU) (Pongo abelii (Sumatran orangutan)).